A 131-amino-acid polypeptide reads, in one-letter code: Small ribosomal subunit protein uS8 (131 aa).

This sequence belongs to the universal ribosomal protein uS8 family. Part of the 30S ribosomal subunit. Contacts proteins S5 and S12.

One of the primary rRNA binding proteins, it binds directly to 16S rRNA central domain where it helps coordinate assembly of the platform of the 30S subunit. The sequence is that of Small ribosomal subunit protein uS8 from Zymomonas mobilis subsp. mobilis (strain ATCC 31821 / ZM4 / CP4).